Reading from the N-terminus, the 2143-residue chain is Proteasome activator BLM10 (2143 aa).

Positions 1-65 are disordered; sequence MTANNDDDIK…SPLRARSATP (65 aa). Phosphoserine occurs at positions 11, 29, 56, and 62. Residues threonine 64 and threonine 66 each carry the phosphothreonine modification. Serine 1041 bears the Phosphoserine mark. An HEAT 1 repeat occupies 1316–1355; sequence VVINKIIPSLEKAIKDHDYMKIQVILNVLLIKKIHRKLMT. A bromodomain-like (BRDL) region spans residues 1648–1732; the sequence is CELNMSDLFE…LAWWLPAVVD (85 aa). HEAT repeat units lie at residues 1779-1814, 1902-1941, and 1985-2023; these read PDVGKLFDELVFDHPYDQVRQAVAKLLTTLVQNQSN, YLVDYVLPFLIGLVKHKDVCALASLDPVRLYAGLGYMPIR, and EEKNKILEFVVSNLYNEQFVEVRVRAASILSDIVHNWKE. The YYX motif signature appears at 2141-2143; the sequence is YYA.

This sequence belongs to the BLM10 family. In terms of assembly, according to PubMed:12973301, colocalizes with nascent proteasome. According to PubMed:15778719, associates with proteasome core particles and also forms a complex with regulatory particle-core particle (RP-CP).

Its subcellular location is the nucleus. It localises to the cytoplasm. Associated component of the proteasome that specifically recognizes acetylated histones and promotes ATP- and ubiquitin-independent degradation of core histones during DNA damage response. Recognizes and binds acetylated histones via its bromodomain-like (BRDL) region and activates the proteasome by opening the gated channel for substrate entry. Binds to the core proteasome via its C-terminus, which occupies the same binding sites as the proteasomal ATPases, opening the closed structure of the proteasome via an active gating mechanism. Involved in DNA damage response in somatic cells: binds to acetylated histones and promotes degradation of histones following DNA double-strand breaks. The polypeptide is Proteasome activator BLM10 (BLM10) (Saccharomyces cerevisiae (strain ATCC 204508 / S288c) (Baker's yeast)).